We begin with the raw amino-acid sequence, 352 residues long: Ion-translocating oxidoreductase complex subunit D (352 aa).

A run of 4 helical transmembrane segments spans residues 20 to 40 (IMLL…WFFG), 44 to 64 (LFQI…VLSL), 78 to 109 (ALLT…IIIA), and 123 to 143 (PAMI…TSWL). At Thr-187 the chain carries FMN phosphoryl threonine. 5 helical membrane-spanning segments follow: residues 214 to 234 (VLAG…GVFL), 242 to 262 (WHIP…GWLF), 267 to 287 (LASP…FFIL), 301 to 321 (LIFG…GGYP), and 322 to 342 (DGVA…DYYT).

The protein belongs to the NqrB/RnfD family. The complex is composed of six subunits: RsxA, RsxB, RsxC, RsxD, RsxE and RsxG. It depends on FMN as a cofactor.

It is found in the cell inner membrane. Part of a membrane-bound complex that couples electron transfer with translocation of ions across the membrane. Required to maintain the reduced state of SoxR. The sequence is that of Ion-translocating oxidoreductase complex subunit D from Salmonella arizonae (strain ATCC BAA-731 / CDC346-86 / RSK2980).